Consider the following 454-residue polypeptide: Nucleoprotein (454 aa).

Positions 1–62 are disordered; sequence MSFVPGQENA…ATTQPNSGSV (62 aa). The segment covering 11–21 has biased composition (low complexity); it reads GSRSSSGSRSG. Residues 49–61 show a composition bias toward polar residues; sequence PKQTATTQPNSGS. Residues 56–197 form an RNA-binding region; it reads QPNSGSVVPH…GFYVEGSGRS (142 aa). The CoV N NTD domain occupies 64 to 193; the sequence is PHYSWFSGIT…VLPQGFYVEG (130 aa). 3 residues coordinate RNA: Arg-109, Arg-125, and Arg-167. Disordered regions lie at residues 159–230, 249–292, and 382–428; these read KTTA…STVK, AGQP…KRGP, and DGGA…RELT. Ser-170 is subject to Phosphoserine; by host. A Phosphothreonine; by host modification is found at Thr-177. The span at 193–212 shows a compositional bias: low complexity; it reads GSGRSAPASRSGSRSQSRGP. A Phosphoserine; by host modification is found at Ser-194. A compositionally biased stretch (polar residues) spans 215–227; the sequence is RARSSSNQRQPAS. The 124-residue stretch at 260-383 folds into the CoV N CTD domain; it reads AKEVRQKILN…ENLNAYQKDG (124 aa). The segment covering 267–277 has biased composition (basic residues); it reads ILNKPRQKRTP. The dimerization stretch occupies residues 267 to 383; that stretch reads ILNKPRQKRT…ENLNAYQKDG (117 aa). Phosphoserine; by host occurs at positions 389 and 424. Thr-428 carries the post-translational modification Phosphothreonine; by host.

Belongs to the betacoronavirus nucleocapsid protein family. In terms of assembly, homooligomer. Both monomeric and oligomeric forms interact with RNA. Interacts with protein M. Interacts with NSP3; this interaction serves to tether the genome to the newly translated replicase-transcriptase complex at a very early stage of infection. ADP-ribosylated. The ADP-ribosylation is retained in the virion during infection. In terms of processing, phosphorylated on serine and threonine residues.

It is found in the virion. It localises to the host endoplasmic reticulum-Golgi intermediate compartment. Its subcellular location is the host Golgi apparatus. Functionally, packages the positive strand viral genome RNA into a helical ribonucleocapsid (RNP) and plays a fundamental role during virion assembly through its interactions with the viral genome and membrane protein M. Plays an important role in enhancing the efficiency of subgenomic viral RNA transcription as well as viral replication. The protein is Nucleoprotein of Murine coronavirus (strain S) (MHV-S).